The primary structure comprises 190 residues: Peptide methionine sulfoxide reductase MsrA (190 aa).

Cysteine 21 is an active-site residue.

It belongs to the MsrA Met sulfoxide reductase family.

It carries out the reaction L-methionyl-[protein] + [thioredoxin]-disulfide + H2O = L-methionyl-(S)-S-oxide-[protein] + [thioredoxin]-dithiol. It catalyses the reaction [thioredoxin]-disulfide + L-methionine + H2O = L-methionine (S)-S-oxide + [thioredoxin]-dithiol. Has an important function as a repair enzyme for proteins that have been inactivated by oxidation. Catalyzes the reversible oxidation-reduction of methionine sulfoxide in proteins to methionine. The polypeptide is Peptide methionine sulfoxide reductase MsrA (Polynucleobacter asymbioticus (strain DSM 18221 / CIP 109841 / QLW-P1DMWA-1) (Polynucleobacter necessarius subsp. asymbioticus)).